Here is a 964-residue protein sequence, read N- to C-terminus: Coatomer subunit beta (964 aa).

HEAT repeat units follow at residues glutamate 129–tryptophan 166, alanine 238–alanine 275, lysine 314–isoleucine 351, aspartate 393–alanine 430, and serine 466–serine 506. Basic and acidic residues predominate over residues arginine 490–lysine 501. The tract at residues arginine 490–serine 530 is disordered. The span at alanine 512–asparagine 526 shows a compositional bias: low complexity.

In terms of assembly, oligomeric complex that consists of at least the alpha, beta, beta', gamma, delta, epsilon and zeta subunits. During oogenesis and spermatogenesis, expressed in ovariole, germarium, testis tip and testis.

It is found in the cytoplasm. Its subcellular location is the golgi apparatus membrane. It localises to the cytoplasmic vesicle. The protein resides in the COPI-coated vesicle membrane. Functionally, the coatomer is a cytosolic protein complex that binds to dilysine motifs and reversibly associates with Golgi non-clathrin-coated vesicles, which further mediate biosynthetic protein transport from the ER, via the Golgi up to the trans Golgi network. Coatomer complex is required for budding from Golgi membranes, and is essential for the retrograde Golgi-to-ER transport of dilysine-tagged proteins. Required for limiting lipid storage in lipid droplets. This chain is Coatomer subunit beta, found in Drosophila melanogaster (Fruit fly).